Reading from the N-terminus, the 806-residue chain is Volume-regulated anion channel subunit LRRC8E (806 aa).

Residues 1–22 are Cytoplasmic-facing; the sequence is MIPVAEFKQFTEQQPAFKVLKP. The chain crosses the membrane as a helical span at residues 23-43; it reads WWDVLAEYITYAMLMIGVFGC. Topologically, residues 44 to 130 are extracellular; that stretch reads TLQVTQDKII…YETALHWYAK (87 aa). The cysteines at positions 54 and 311 are disulfide-linked. N-linked (GlcNAc...) asparagine glycans are attached at residues asparagine 57 and asparagine 80. The disordered stretch occupies residues 75–104; it reads QSSASNDSDLETTVPPPTATSSPPREMSGL. Residues 131–151 traverse the membrane as a helical segment; that stretch reads YFPYLVVIHTLIFIICGNFWF. Over 152–275 the chain is Cytoplasmic; sequence KFPGTSSKIE…MRQTVLKVCK (124 aa). Residues 182–217 form a disordered region; the sequence is EVSGESSQEKPNQERSIDRELSKPNFEEGSPATADL. A compositionally biased stretch (basic and acidic residues) spans 188–207; sequence SQEKPNQERSIDRELSKPNF. The helical transmembrane segment at 276-296 threads the bilayer; that stretch reads FVLITIYNAVLVGKIHFIVPC. Residues 297 to 323 are Extracellular-facing; sequence SVHTEDMTGYNSFCCNHTKAHLFSKLA. N-linked (GlcNAc...) asparagine glycosylation occurs at asparagine 312. The helical transmembrane segment at 324-344 threads the bilayer; it reads ISYLCFLGVYGLTCFYTLYWL. Residues 345-806 lie on the Cytoplasmic side of the membrane; the sequence is FRRPLKEYSF…VDVRDKFKED (462 aa). LRR repeat units lie at residues 569–589, 593–614, 616–637, 641–662, 664–685, 687–708, 710–731, 733–754, and 756–777; these read HLQKFSIHNDGTKLLTLNALK, LVKELELVRCELERIPHAVFSL, NLQVLDLKENTLHTIEEIISLQ, KLSVLRLWHNQIAYIPDHIRKL, GLEELSLNRNKILVIPSQLFLC, KLRHLDLSFNEIRELPPEIGVL, LLQYLGLSGNFLEDLPTELFFC, KLKTLKLGQNRLASLSPKVGSL, and CLVKLELKGNRMDMLPPEIGNC.

It belongs to the LRRC8 family. As to quaternary structure, heterohexamer; oligomerizes with other LRRC8 proteins (lrrc8a, lrrc8c, lrrc8d and/or lrrc8b) to form a heterohexamer. Detected in a channel complex that contains lrrc8a, lrrc8c and lrrc8e. In vivo, the subunit composition may depend primarily on expression levels, and heterooligomeric channels containing various proportions of the different LRRC8 proteins may coexist.

The protein resides in the cell membrane. It is found in the endoplasmic reticulum membrane. The protein localises to the lysosome membrane. The enzyme catalyses chloride(in) = chloride(out). The catalysed reaction is iodide(out) = iodide(in). It carries out the reaction taurine(out) = taurine(in). It catalyses the reaction 2',3'-cGAMP(out) = 2',3'-cGAMP(in). In terms of biological role, non-essential component of the volume-regulated anion channel (VRAC, also named VSOAC channel), an anion channel required to maintain a constant cell volume in response to extracellular or intracellular osmotic changes. The VRAC channel conducts iodide better than chloride and can also conduct organic osmolytes like taurine. Mediates efflux of amino acids, such as aspartate, in response to osmotic stress. The VRAC channel also mediates transport of immunoreactive cyclic dinucleotide GMP-AMP (2'-3'-cGAMP), an immune messenger produced in response to DNA virus in the cytosol. Channel activity requires lrrc8a plus at least one other family member (lrrc8b, lrrc8c, lrrc8d or lrrc8e); channel characteristics depend on the precise subunit composition. Also plays a role in lysosome homeostasis by forming functional lysosomal VRAC channels in response to low cytoplasmic ionic strength condition: lysosomal VRAC channels are necessary for the formation of large lysosome-derived vacuoles, which store and then expel excess water to maintain cytosolic water homeostasis. This Xenopus laevis (African clawed frog) protein is Volume-regulated anion channel subunit LRRC8E.